A 160-amino-acid polypeptide reads, in one-letter code: Ribonuclease HI (160 aa).

Residues 4-147 (TPNSVTLYTD…CDRLAVAAYQ (144 aa)) form the RNase H type-1 domain. Mg(2+) contacts are provided by Asp-13, Glu-52, Asp-74, and Asp-139.

This sequence belongs to the RNase H family. Monomer. Mg(2+) serves as cofactor.

It localises to the cytoplasm. The enzyme catalyses Endonucleolytic cleavage to 5'-phosphomonoester.. In terms of biological role, endonuclease that specifically degrades the RNA of RNA-DNA hybrids. The sequence is that of Ribonuclease HI (rnhA) from Synechocystis sp. (strain ATCC 27184 / PCC 6803 / Kazusa).